We begin with the raw amino-acid sequence, 723 residues long: Polyribonucleotide nucleotidyltransferase (723 aa).

The Mg(2+) site is built by Asp-488 and Asp-494. Residues 555 to 614 enclose the KH domain; sequence PRMITMKIHPDKIREVIGKGGSTIQALTKETGTTIDIQEDGTITIASTSTEGMAEAKRRI. Positions 624–692 constitute an S1 motif domain; it reads GKIYAGTVLK…EKGRLRLSLK (69 aa). The tract at residues 701-723 is disordered; it reads SISPINAGESAAPAAPAGGSEQQ. Residues 707–723 show a composition bias toward low complexity; that stretch reads AGESAAPAAPAGGSEQQ.

Belongs to the polyribonucleotide nucleotidyltransferase family. Mg(2+) serves as cofactor.

Its subcellular location is the cytoplasm. The catalysed reaction is RNA(n+1) + phosphate = RNA(n) + a ribonucleoside 5'-diphosphate. Functionally, involved in mRNA degradation. Catalyzes the phosphorolysis of single-stranded polyribonucleotides processively in the 3'- to 5'-direction. The sequence is that of Polyribonucleotide nucleotidyltransferase from Cupriavidus taiwanensis (strain DSM 17343 / BCRC 17206 / CCUG 44338 / CIP 107171 / LMG 19424 / R1) (Ralstonia taiwanensis (strain LMG 19424)).